The primary structure comprises 309 residues: Taste receptor type 2 member 8 (309 aa).

Residues Met1–Asn7 are Extracellular-facing. A helical transmembrane segment spans residues Ile8–Ala28. At Leu29 to Asn50 the chain is on the cytoplasmic side. Residues Leu51 to Leu71 traverse the membrane as a helical segment. The Extracellular portion of the chain corresponds to Asn72–Gln82. A helical membrane pass occupies residues Ile83–Leu103. Topologically, residues Asn104–His131 are cytoplasmic. A helical transmembrane segment spans residues Trp132–Leu152. At Ser153–Thr184 the chain is on the extracellular side. A glycan (N-linked (GlcNAc...) asparagine) is linked at Asn167. Residues Leu185–Val205 traverse the membrane as a helical segment. The Cytoplasmic portion of the chain corresponds to Arg206 to Ser239. A helical membrane pass occupies residues Phe240–Met260. At Thr261–Ala266 the chain is on the extracellular side. The helical transmembrane segment at Val267–Val287 threads the bilayer. Residues Leu288 to Ile309 are Cytoplasmic-facing.

The protein belongs to the G-protein coupled receptor T2R family. As to expression, expressed in subsets of taste receptor cells of the tongue and palate epithelium and exclusively in gustducin-positive cells.

The protein localises to the membrane. Its function is as follows. Receptor that may play a role in the perception of bitterness and is gustducin-linked. May play a role in sensing the chemical composition of the gastrointestinal content. The activity of this receptor may stimulate alpha gustducin, mediate PLC-beta-2 activation and lead to the gating of TRPM5. This Homo sapiens (Human) protein is Taste receptor type 2 member 8 (TAS2R8).